A 399-amino-acid chain; its full sequence is Glucosamine kinase (399 aa).

Residues Lys98, 149–151 (EYL), and Asp156 each bind ATP. Asp262 is a D-glucosamine binding site. Residues Gln267, Asp279, and Asp281 each coordinate Mg(2+). The Substrate specificity determinant motif signature appears at 366–381 (QVLREIIYAARHLPRW). D-glucosamine is bound at residue Glu370.

The protein belongs to the actinobacterial glucosamine kinase family. In terms of assembly, monomer. The cofactor is Mg(2+).

It carries out the reaction D-glucosamine + ATP = D-glucosamine 6-phosphate + ADP + H(+). In terms of biological role, catalyzes the ATP-dependent phosphorylation of D-glucosamine (GlcN) to D-glucosamine 6-phosphate. May be involved in the phosphorylation of acquired extracellular GlcN derived from the hydrolysis of chitosan, i.e., in the incorporation of exogenous GlcN into the bacterial GlcNAc metabolism. Is unable to phosphorylate maltose. This chain is Glucosamine kinase, found in Mycolicibacterium smegmatis (strain ATCC 700084 / mc(2)155) (Mycobacterium smegmatis).